Reading from the N-terminus, the 324-residue chain is Protoheme IX farnesyltransferase (324 aa).

The next 9 helical transmembrane spans lie at 31 to 51, 53 to 73, 104 to 124, 125 to 145, 153 to 173, 181 to 201, 222 to 242, 243 to 263, and 285 to 305; these read LIVL…RGEV, PVLA…ANTI, LVFA…CANL, LSAC…THWL, IVIG…AVTG, VLFA…AMLI, TAWQ…LLVY, PLHA…VVFI, and FSIL…LPLT.

Belongs to the UbiA prenyltransferase family. Protoheme IX farnesyltransferase subfamily.

The protein resides in the cell inner membrane. It carries out the reaction heme b + (2E,6E)-farnesyl diphosphate + H2O = Fe(II)-heme o + diphosphate. Its pathway is porphyrin-containing compound metabolism; heme O biosynthesis; heme O from protoheme: step 1/1. Its function is as follows. Converts heme B (protoheme IX) to heme O by substitution of the vinyl group on carbon 2 of heme B porphyrin ring with a hydroxyethyl farnesyl side group. This chain is Protoheme IX farnesyltransferase, found in Cyanothece sp. (strain PCC 7425 / ATCC 29141).